Here is a 691-residue protein sequence, read N- to C-terminus: Elongation factor G (691 aa).

The 275-residue stretch at 8–282 (ERVRNIGIAA…AVVDYLPAPV (275 aa)) folds into the tr-type G domain. GTP is bound by residues 17-24 (AHIDAGKT), 81-85 (DTPGH), and 135-138 (NKMD).

It belongs to the TRAFAC class translation factor GTPase superfamily. Classic translation factor GTPase family. EF-G/EF-2 subfamily.

The protein resides in the cytoplasm. Catalyzes the GTP-dependent ribosomal translocation step during translation elongation. During this step, the ribosome changes from the pre-translocational (PRE) to the post-translocational (POST) state as the newly formed A-site-bound peptidyl-tRNA and P-site-bound deacylated tRNA move to the P and E sites, respectively. Catalyzes the coordinated movement of the two tRNA molecules, the mRNA and conformational changes in the ribosome. The sequence is that of Elongation factor G from Prochlorococcus marinus (strain AS9601).